Reading from the N-terminus, the 70-residue chain is DNA-directed RNA polymerase subunit omega (70 aa).

It belongs to the RNA polymerase subunit omega family. The RNAP catalytic core consists of 2 alpha, 1 beta, 1 beta' and 1 omega subunit. When a sigma factor is associated with the core the holoenzyme is formed, which can initiate transcription.

It carries out the reaction RNA(n) + a ribonucleoside 5'-triphosphate = RNA(n+1) + diphosphate. Its function is as follows. Promotes RNA polymerase assembly. Latches the N- and C-terminal regions of the beta' subunit thereby facilitating its interaction with the beta and alpha subunits. The protein is DNA-directed RNA polymerase subunit omega of Thermoanaerobacter sp. (strain X514).